The primary structure comprises 363 residues: MAP kinase kinase mkk-4 (363 aa).

Residues 1 to 38 (MVQEDDENLRNSMSLRPTSLSTRPTSLSVNGNEKTLPE) form a disordered region. Low complexity predominate over residues 14–28 (SLRPTSLSTRPTSLS). One can recognise a Protein kinase domain in the interval 66–330 (LQDLGAIGNG…YDTLKSFDFY (265 aa)). ATP contacts are provided by residues 72-80 (IGNGNFGTV) and Lys-95. The active-site Proton acceptor is Asp-194.

It belongs to the protein kinase superfamily. STE Ser/Thr protein kinase family. MAP kinase kinase subfamily. Expressed in the pharynx, including the corpus, isthmus and terminal bulb.

The protein localises to the cytoplasm. The enzyme catalyses L-seryl-[protein] + ATP = O-phospho-L-seryl-[protein] + ADP + H(+). It carries out the reaction L-threonyl-[protein] + ATP = O-phospho-L-threonyl-[protein] + ADP + H(+). The catalysed reaction is L-tyrosyl-[protein] + ATP = O-phospho-L-tyrosyl-[protein] + ADP + H(+). Activity is required in presynaptic neurons, in a dose-dependent manner, for normal presynaptic development and morphology. Plays a role in the formation of muscle connections, also called muscle arm extensions, between the body wall and the motor axons in the dorsal and ventral cord. This Caenorhabditis elegans protein is MAP kinase kinase mkk-4 (mkk-4).